The following is a 631-amino-acid chain: Dolichyl-diphosphooligosaccharide--protein glycosyltransferase subunit 2 (631 aa).

An N-terminal signal peptide occupies residues 1–22; that stretch reads MASPGASTVFLLALTILAGTQA. Over 23–540 the chain is Lumenal; the sequence is LTPTHYLTKP…REPEKRPPTV (518 aa). An N-linked (GlcNAc...) asparagine glycan is attached at asparagine 106. Lysine 154 participates in a covalent cross-link: Glycyl lysine isopeptide (Lys-Gly) (interchain with G-Cter in ubiquitin). The helical transmembrane segment at 541–561 threads the bilayer; that stretch reads VSNTFTALILSPLLLLFALWI. At 562–571 the chain is on the cytoplasmic side; the sequence is RIGANVSNFT. The chain crosses the membrane as a helical span at residues 572–592; it reads FAPSTIIFHLGHAAMLGLMYV. Topologically, residues 593-596 are lumenal; that stretch reads YWTQ. Residues 597-617 traverse the membrane as a helical segment; it reads LNMFQTLKYLAILGSVTFLAG. The Cytoplasmic segment spans residues 618 to 631; it reads NRMLAQQAIKRTAH.

This sequence belongs to the SWP1 family. As to quaternary structure, component of the oligosaccharyltransferase (OST) complex. OST exists in two different complex forms which contain common core subunits RPN1, RPN2, OST48, OST4, DAD1 and TMEM258, either STT3A or STT3B as catalytic subunits, and form-specific accessory subunits. STT3A complex assembly occurs through the formation of 3 subcomplexes. Subcomplex 1 contains RPN1 and TMEM258, subcomplex 2 contains the STT3A-specific subunits STT3A, DC2/OSTC, and KCP2 as well as the core subunit OST4, and subcomplex 3 contains RPN2, DAD1, and OST48. The STT3A complex can form stable complexes with the Sec61 complex or with both the Sec61 and TRAP complexes. Interacts with DDI2. Interacts with TMEM35A/NACHO.

It localises to the endoplasmic reticulum. The protein localises to the endoplasmic reticulum membrane. It functions in the pathway protein modification; protein glycosylation. In terms of biological role, subunit of the oligosaccharyl transferase (OST) complex that catalyzes the initial transfer of a defined glycan (Glc(3)Man(9)GlcNAc(2) in eukaryotes) from the lipid carrier dolichol-pyrophosphate to an asparagine residue within an Asn-X-Ser/Thr consensus motif in nascent polypeptide chains, the first step in protein N-glycosylation. N-glycosylation occurs cotranslationally and the complex associates with the Sec61 complex at the channel-forming translocon complex that mediates protein translocation across the endoplasmic reticulum (ER). All subunits are required for a maximal enzyme activity. This is Dolichyl-diphosphooligosaccharide--protein glycosyltransferase subunit 2 from Canis lupus familiaris (Dog).